Here is a 522-residue protein sequence, read N- to C-terminus: Maturase K (522 aa).

It belongs to the intron maturase 2 family. MatK subfamily.

It localises to the plastid. It is found in the chloroplast. Its function is as follows. Usually encoded in the trnK tRNA gene intron. Probably assists in splicing its own and other chloroplast group II introns. This Watsonia angusta protein is Maturase K.